The following is a 512-amino-acid chain: Glutathione-binding protein GsiB (512 aa).

An N-terminal signal peptide occupies residues 1 to 26 (MARAVHRSGLVALGIATALMASCAFA).

Belongs to the bacterial solute-binding protein 5 family. In terms of assembly, the complex is composed of two ATP-binding proteins (GsiA), two transmembrane proteins (GsiC and GsiD) and a solute-binding protein (GsiB). In the presence of glutathione, interacts with the transmembrane proteins GsiC and GsiD.

The protein localises to the periplasm. Functionally, part of the ABC transporter complex GsiABCD involved in glutathione import. Binds glutathione. This chain is Glutathione-binding protein GsiB, found in Escherichia coli (strain K12).